Here is a 154-residue protein sequence, read N- to C-terminus: Putative pre-16S rRNA nuclease (154 aa).

Belongs to the YqgF nuclease family.

The protein localises to the cytoplasm. Could be a nuclease involved in processing of the 5'-end of pre-16S rRNA. The chain is Putative pre-16S rRNA nuclease from Gluconacetobacter diazotrophicus (strain ATCC 49037 / DSM 5601 / CCUG 37298 / CIP 103539 / LMG 7603 / PAl5).